The following is a 67-amino-acid chain: Small, acid-soluble spore protein B (67 aa).

Belongs to the alpha/beta-type SASP family.

Functionally, SASP are bound to spore DNA. They are double-stranded DNA-binding proteins that cause DNA to change to an a-like conformation. They protect the DNA backbone from chemical and enzymatic cleavage and are thus involved in dormant spore's high resistance to UV light. In Bacillus subtilis (strain 168), this protein is Small, acid-soluble spore protein B (sspB).